A 626-amino-acid polypeptide reads, in one-letter code: Phosphoenolpyruvate carboxykinase (ATP) 2 (626 aa).

Disordered regions lie at residues 1 to 23 (MASP…APVN) and 64 to 86 (PNLV…KHQQ). Residue 324–331 (GLSGTGKT) participates in ATP binding.

It belongs to the phosphoenolpyruvate carboxykinase (ATP) family. In terms of assembly, homohexamer.

The protein localises to the cytoplasm. The catalysed reaction is oxaloacetate + ATP = phosphoenolpyruvate + ADP + CO2. The protein operates within carbohydrate biosynthesis; gluconeogenesis. The sequence is that of Phosphoenolpyruvate carboxykinase (ATP) 2 (PCK2) from Urochloa panicoides (Panic liverseed grass).